The sequence spans 118 residues: Large ribosomal subunit protein bL21c (118 aa).

The protein belongs to the bacterial ribosomal protein bL21 family. As to quaternary structure, part of the 50S ribosomal subunit.

It localises to the plastid. It is found in the chloroplast. Its function is as follows. This protein binds to 23S rRNA. In Anthoceros angustus (Hornwort), this protein is Large ribosomal subunit protein bL21c.